We begin with the raw amino-acid sequence, 214 residues long: MFVLSTAMACLVYIYIYIYDEEKKRELKVRNKMTNLLFFQFLLLTTASSLTHISAQTVPPPPPPPTSAATPPSRAAQEFLDAHNKARSEVGVGPLTWSPMLAKETSLLVRYQRDKQNCSFANLSNGKYGGNQLWASGTVVTPRMAVDSWVAEKKFYNYENNSCTGDDKCGVYTQIVWKKSIELGCAQRTCYEGPATLTVCFYNPPGNVIGEKPY.

The first 19 residues, 1–19 (MFVLSTAMACLVYIYIYIY), serve as a signal peptide directing secretion. Tandem repeats lie at residues 13 to 14 (YI), 15 to 16 (YI), and 17 to 18 (YI). The interval 13 to 18 (YIYIYI) is 3 X 2 AA tandem repeats of Y-I. Positions 80 to 200 (LDAHNKARSE…YEGPATLTVC (121 aa)) constitute an SCP domain.

It belongs to the CRISP family. As to expression, highly expressed in the stigma and stylar cortex throughout pistil development. Not expressed in other organs.

Functionally, may protect the outer tissues of the pistil from pathogen attack. This chain is STS14 protein (STS14), found in Solanum tuberosum (Potato).